We begin with the raw amino-acid sequence, 638 residues long: LIM domain kinase 2 (638 aa).

2 consecutive LIM zinc-binding domains span residues 12-63 and 72-124; these read CPGC…CPKD and CHGC…CGKC. A PDZ domain is found at 152 to 239; it reads LISMPATTEG…TLQLLIEHDP (88 aa). Threonine 210 bears the Phosphothreonine mark. The segment at 279 to 304 is disordered; that stretch reads LRRRSLRRSNSISKSPGPSSPKEPLL. The segment covering 286-302 has biased composition (low complexity); it reads RSNSISKSPGPSSPKEP. 2 positions are modified to phosphoserine: serine 293 and serine 298. Residues 331–608 form the Protein kinase domain; that stretch reads LIHGEVLGKG…DSFEALSLYL (278 aa). ATP is bound by residues 337–345 and lysine 360; that span reads LGKGFFGQA. Aspartate 451 is a catalytic residue. Position 505 is a phosphothreonine; by ROCK1 and CDC42BP (threonine 505).

The protein belongs to the protein kinase superfamily. TKL Ser/Thr protein kinase family. In terms of assembly, interacts with LIMK2b. Interacts with LIMK2a. As to quaternary structure, binds ROCK1 and MARF1. Interacts with NISCH. In terms of processing, phosphorylated on serine and/or threonine residues by ROCK1.

It localises to the cytoplasm. Its subcellular location is the cytoskeleton. It is found in the spindle. The protein localises to the microtubule organizing center. The protein resides in the centrosome. It localises to the nucleus. Its subcellular location is the perinuclear region. It catalyses the reaction L-seryl-[protein] + ATP = O-phospho-L-seryl-[protein] + ADP + H(+). The enzyme catalyses L-threonyl-[protein] + ATP = O-phospho-L-threonyl-[protein] + ADP + H(+). Serine/threonine-protein kinase that plays an essential role in the regulation of actin filament dynamics. Acts downstream of several Rho family GTPase signal transduction pathways. Involved in astral microtubule organization and mitotic spindle orientation during early stages of mitosis by mediating phosphorylation of TPPP. Displays serine/threonine-specific phosphorylation of myelin basic protein and histone (MBP) in vitro. Suppresses ciliogenesis via multiple pathways; phosphorylation of CFL1, suppression of directional trafficking of ciliary vesicles to the ciliary base, and by facilitating YAP1 nuclear localization where it acts as a transcriptional corepressor of the TEAD4 target genes AURKA and PLK1. This Homo sapiens (Human) protein is LIM domain kinase 2 (LIMK2).